A 215-amino-acid chain; its full sequence is Outer-membrane lipoprotein LolB (215 aa).

The first 19 residues, 1–19, serve as a signal peptide directing secretion; that stretch reads MSKLRKITSLIFLTIIMVG. A lipid anchor (N-palmitoyl cysteine) is attached at C20. C20 is lipidated: S-diacylglycerol cysteine.

It belongs to the LolB family. In terms of assembly, monomer.

It localises to the cell outer membrane. Its function is as follows. Plays a critical role in the incorporation of lipoproteins in the outer membrane after they are released by the LolA protein. This chain is Outer-membrane lipoprotein LolB, found in Vibrio atlanticus (strain LGP32) (Vibrio splendidus (strain Mel32)).